A 320-amino-acid chain; its full sequence is Methionine import ATP-binding protein MetN (320 aa).

The ABC transporter domain maps to 2–237 (IEIKNVSKYF…PSSEMKKLIG (236 aa)). 34 to 41 (GHSGAGKS) contacts ATP.

This sequence belongs to the ABC transporter superfamily. Methionine importer (TC 3.A.1.24) family. As to quaternary structure, the complex is composed of two ATP-binding proteins (MetN), two transmembrane proteins (MetI) and a solute-binding protein (MetQ).

It is found in the cell membrane. The enzyme catalyses L-methionine(out) + ATP + H2O = L-methionine(in) + ADP + phosphate + H(+). It carries out the reaction D-methionine(out) + ATP + H2O = D-methionine(in) + ADP + phosphate + H(+). Functionally, part of the ABC transporter complex MetNIQ involved in methionine import. Responsible for energy coupling to the transport system. The sequence is that of Methionine import ATP-binding protein MetN from Clostridium acetobutylicum (strain ATCC 824 / DSM 792 / JCM 1419 / IAM 19013 / LMG 5710 / NBRC 13948 / NRRL B-527 / VKM B-1787 / 2291 / W).